The following is a 514-amino-acid chain: Maltose/maltodextrin transport system permease protein MalF (514 aa).

Topologically, residues 1 to 16 (MDVIKKKHWWQSDALK) are cytoplasmic. A helical membrane pass occupies residues 17 to 36 (WSVLGLLGLLVGYLVVLMYA). The Periplasmic segment spans residues 37 to 39 (QGE). A helical transmembrane segment spans residues 40-58 (YLFAITTLILSSAGLYIFA). The Cytoplasmic segment spans residues 59-66 (NRKAYAWR). A helical membrane pass occupies residues 67–92 (YVYPGMAGMGLFVLFPLVCTIAIAFT). Residues 93 to 275 (NYSSTNQLTF…RVFTDEGIQK (183 aa)) are Periplasmic-facing. The helical transmembrane segment at 276–306 (PFLAIFVWTVVFSLITVFLTVAVGMVLACLV) threads the bilayer. In terms of domain architecture, ABC transmembrane type-1 spans 281–505 (FVWTVVFSLI…LLVGALAIVN (225 aa)). The Cytoplasmic segment spans residues 307–318 (QWEALRGKAVYR). Residues 319-336 (VLLILPYAVPSFISILIF) traverse the membrane as a helical segment. The Periplasmic portion of the chain corresponds to 337–369 (KGLFNQSFGEINMMLSALFGVKPAWFSDPTTAR). A helical transmembrane segment spans residues 370-392 (TMLIIVNTWLGYPYMMILCMGLL). At 393 to 425 (KAIPDDLYEASAMDGAGPFQNFFKITLPLLIKP) the chain is on the cytoplasmic side. Residues 426–452 (LTPLMIASFAFNFNNFVLIQLLTNGGP) traverse the membrane as a helical segment. The Periplasmic portion of the chain corresponds to 453 to 483 (DRLGTTTPAGYTDLLVNYTYRIAFEGGGGQD). The helical transmembrane segment at 484-505 (FGLAAAIATLIFLLVGALAIVN) threads the bilayer. Over 506-514 (LKATRMKFD) the chain is Cytoplasmic.

Belongs to the binding-protein-dependent transport system permease family. MalFG subfamily. In terms of assembly, the complex is composed of two ATP-binding proteins (MalK), two transmembrane proteins (MalG and MalF) and a solute-binding protein (MalE). Protein stability and stable complex formation require YidC.

Its subcellular location is the cell inner membrane. Its function is as follows. Part of the ABC transporter complex MalEFGK involved in maltose/maltodextrin import. Probably responsible for the translocation of the substrate across the membrane. This chain is Maltose/maltodextrin transport system permease protein MalF, found in Escherichia coli (strain K12).